The following is a 218-amino-acid chain: NAD(P)H-quinone oxidoreductase subunit I (218 aa).

4Fe-4S ferredoxin-type domains lie at 55–84 and 95–124; these read GRIHYEFDKCIACEVCVRVCPINLPVVDWV and RNYSIDFGACIFCGNCVEYCPTNCLSMTEE. Cys-64, Cys-67, Cys-70, Cys-74, Cys-104, Cys-107, Cys-110, and Cys-114 together coordinate [4Fe-4S] cluster. The segment at 169–218 is disordered; the sequence is MDPHELPANQQRAGKLPSQIIKELQAEKSEEKGNNNSSDIVPNKLNSTNK. Positions 192–201 are enriched in basic and acidic residues; that stretch reads LQAEKSEEKG. A compositionally biased stretch (polar residues) spans 202–218; it reads NNNSSDIVPNKLNSTNK.

It belongs to the complex I 23 kDa subunit family. NDH-1 is composed of at least 11 different subunits. [4Fe-4S] cluster is required as a cofactor.

The protein localises to the cellular thylakoid membrane. The enzyme catalyses a plastoquinone + NADH + (n+1) H(+)(in) = a plastoquinol + NAD(+) + n H(+)(out). It carries out the reaction a plastoquinone + NADPH + (n+1) H(+)(in) = a plastoquinol + NADP(+) + n H(+)(out). Functionally, NDH-1 shuttles electrons from an unknown electron donor, via FMN and iron-sulfur (Fe-S) centers, to quinones in the respiratory and/or the photosynthetic chain. The immediate electron acceptor for the enzyme in this species is believed to be plastoquinone. Couples the redox reaction to proton translocation, and thus conserves the redox energy in a proton gradient. This Prochlorococcus marinus (strain NATL1A) protein is NAD(P)H-quinone oxidoreductase subunit I.